Here is a 174-residue protein sequence, read N- to C-terminus: Co-chaperone protein HscB homolog (174 aa).

Residues 2–74 (NYFELFNLPV…IRRAEHMLAL (73 aa)) enclose the J domain.

It belongs to the HscB family. Interacts with HscA and stimulates its ATPase activity.

Functionally, co-chaperone involved in the maturation of iron-sulfur cluster-containing proteins. Seems to help targeting proteins to be folded toward HscA. In Shewanella amazonensis (strain ATCC BAA-1098 / SB2B), this protein is Co-chaperone protein HscB homolog.